Consider the following 61-residue polypeptide: Chromatin protein Cren7 (61 aa).

Belongs to the Cren7 family. Monomer. In terms of processing, methylated at multiple sites, to varying extents.

The protein localises to the chromosome. Its subcellular location is the cytoplasm. In terms of biological role, a chromatin protein, binds double-stranded DNA without sequence specificity. Constrains negative DNA supercoils. The polypeptide is Chromatin protein Cren7 (Caldivirga maquilingensis (strain ATCC 700844 / DSM 13496 / JCM 10307 / IC-167)).